Here is a 220-residue protein sequence, read N- to C-terminus: Regulatory protein VanRB (220 aa).

A Response regulatory domain is found at 4–117; it reads RILLVEDDDH…ILLKRVEALL (114 aa). At Asp53 the chain carries 4-aspartylphosphate. A DNA-binding region (ompR/PhoB-type) is located at residues 124–218; that stretch reads AKEFRVGRLT…IRGVGYRLEE (95 aa).

In terms of processing, may be phosphorylated by VanSB. May also be dephosphorylated by VanSB.

It localises to the cytoplasm. In terms of biological role, member of the two-component regulatory system VanSB/VanRB. Activates the transcription of vanSB, vanYB and vanW in response to vancomycin which results in vancomycin resistance. The chain is Regulatory protein VanRB (vanRB) from Enterococcus faecalis (strain ATCC 700802 / V583).